The following is a 209-amino-acid chain: Large ribosomal subunit protein uL3 (209 aa).

An N5-methylglutamine modification is found at Gln-150.

Belongs to the universal ribosomal protein uL3 family. Part of the 50S ribosomal subunit. Forms a cluster with proteins L14 and L19. In terms of processing, methylated by PrmB.

Its function is as follows. One of the primary rRNA binding proteins, it binds directly near the 3'-end of the 23S rRNA, where it nucleates assembly of the 50S subunit. This Pasteurella multocida (strain Pm70) protein is Large ribosomal subunit protein uL3.